Here is a 113-residue protein sequence, read N- to C-terminus: MICLKILRFYQKFLSPLKPAACRYYPSCSEYALWQFQKKNFFLAFFSTFFRILRCNPFFKGGFDYPRVSKNFYPINLCFKPIFLAEKQLCFLYIPYKNKSFYLIKIIFKRTNQ.

The protein belongs to the UPF0161 family.

Its subcellular location is the cell inner membrane. In terms of biological role, could be involved in insertion of integral membrane proteins into the membrane. The protein is Putative membrane protein insertion efficiency factor of Campylobacter jejuni subsp. jejuni serotype O:2 (strain ATCC 700819 / NCTC 11168).